Consider the following 157-residue polypeptide: Transmembrane protein 42 (157 aa).

4 consecutive transmembrane segments (helical) span residues 37–57, 67–87, 100–120, and 124–144; these read FWGVFNCLCAGAFGALAAAAA, IGLCVLGIVAMASANSLMWTF, IASVTVTFSNILCSAILGYLL, and CQEILWWGGVFLILCGLTLIH.

It localises to the membrane. This Mus musculus (Mouse) protein is Transmembrane protein 42 (Tmem42).